The primary structure comprises 324 residues: Type II restriction enzyme AplI (324 aa).

Belongs to the BsuBI/PstI type II restriction endonuclease family. Mg(2+) is required as a cofactor.

It catalyses the reaction Endonucleolytic cleavage of DNA to give specific double-stranded fragments with terminal 5'-phosphates.. With respect to regulation, activated by K(+) and Na(+) ions, whereas NH(4)(+) ions appear to inhibit endonuclease activity. In terms of biological role, a P subtype restriction enzyme that recognizes the double-stranded sequence 5'-CTGCAG-3' and cleaves after A-5. The sequence is that of Type II restriction enzyme AplI (aplIR) from Arthrospira platensis (strain NIES-39 / UTEX 3086 / IAM M-135) (Spirulina platensis).